Here is a 416-residue protein sequence, read N- to C-terminus: MNKQSWLLNLSLLKTHPAFRAVFLARFISIVSLGLLGVAVPVQIQMMTHSTWQVGLSVTLTGGAMFVGLMVGGVLADRYERKKVILLARGTCGIGFIGLCLNALLPEPSLLAIYLLGLWDGFFASLGVTALLAATPALVGRENLMQAGAITMLTVRLGSVISPMIGGLLLATGGVAWNYGLAAAGTFITLLPLLSLPALPPPPQPREHPLKSLLAGFRFLLASPLVGGIALLGGLLTMASAVRVLYPALADNWQMSAAQIGFLYAAIPLGAAIGALTSGKLAHSARPGLLMLLSTLGSFLAIGLFGLMPMWILGVICLALFGWLSAVSSLLQYTMLQTQTPEAMLGRINGLWTAQNVTGDAIGAALLGGLGAMMTPVASASASGFGLLIIGVLLLLVLVELRRFRQTPPQVTASDS.

Over 1 to 21 (MNKQSWLLNLSLLKTHPAFRA) the chain is Cytoplasmic. Residues 22–42 (VFLARFISIVSLGLLGVAVPV) form a helical membrane-spanning segment. The Periplasmic segment spans residues 43-55 (QIQMMTHSTWQVG). Residues 56-76 (LSVTLTGGAMFVGLMVGGVLA) traverse the membrane as a helical segment. At 77–83 (DRYERKK) the chain is on the cytoplasmic side. The helical transmembrane segment at 84 to 104 (VILLARGTCGIGFIGLCLNAL) threads the bilayer. Topologically, residues 105–109 (LPEPS) are periplasmic. A helical transmembrane segment spans residues 110 to 130 (LLAIYLLGLWDGFFASLGVTA). Over 131 to 156 (LLAATPALVGRENLMQAGAITMLTVR) the chain is Cytoplasmic. The chain crosses the membrane as a helical span at residues 157–177 (LGSVISPMIGGLLLATGGVAW). Position 178 (Asn-178) is a topological domain, periplasmic. Residues 179–199 (YGLAAAGTFITLLPLLSLPAL) traverse the membrane as a helical segment. The Cytoplasmic segment spans residues 200-218 (PPPPQPREHPLKSLLAGFR). Residues 219-239 (FLLASPLVGGIALLGGLLTMA) form a helical membrane-spanning segment. Topologically, residues 240-256 (SAVRVLYPALADNWQMS) are periplasmic. The chain crosses the membrane as a helical span at residues 257-277 (AAQIGFLYAAIPLGAAIGALT). Residues 278 to 287 (SGKLAHSARP) are Cytoplasmic-facing. The chain crosses the membrane as a helical span at residues 288 to 307 (GLLMLLSTLGSFLAIGLFGL). The Periplasmic portion of the chain corresponds to 308–313 (MPMWIL). Residues 314–336 (GVICLALFGWLSAVSSLLQYTML) traverse the membrane as a helical segment. Residues 337-356 (QTQTPEAMLGRINGLWTAQN) are Cytoplasmic-facing. The chain crosses the membrane as a helical span at residues 357 to 377 (VTGDAIGAALLGGLGAMMTPV). A topological domain (periplasmic) is located at residue Ala-378. A helical membrane pass occupies residues 379–399 (SASASGFGLLIIGVLLLLVLV). Residues 400-416 (ELRRFRQTPPQVTASDS) are Cytoplasmic-facing.

Belongs to the major facilitator superfamily. EntS (TC 2.A.1.38) family.

Its subcellular location is the cell inner membrane. Component of an export pathway for enterobactin. This chain is Enterobactin exporter EntS, found in Escherichia coli O81 (strain ED1a).